The sequence spans 143 residues: Large ribosomal subunit protein uL13 (143 aa).

It belongs to the universal ribosomal protein uL13 family. In terms of assembly, part of the 50S ribosomal subunit.

This protein is one of the early assembly proteins of the 50S ribosomal subunit, although it is not seen to bind rRNA by itself. It is important during the early stages of 50S assembly. In Rubrobacter xylanophilus (strain DSM 9941 / JCM 11954 / NBRC 16129 / PRD-1), this protein is Large ribosomal subunit protein uL13.